Consider the following 261-residue polypeptide: Cytochrome c oxidase subunit 3 (261 aa).

The Mitochondrial matrix portion of the chain corresponds to M1 to P15. Residues W16–W34 traverse the membrane as a helical segment. Over F35–L40 the chain is Mitochondrial intermembrane. The chain crosses the membrane as a helical span at residues I41–T66. At F67 to T72 the chain is on the mitochondrial matrix side. Residues P73–S105 traverse the membrane as a helical segment. The Mitochondrial intermembrane portion of the chain corresponds to L106–E128. The helical transmembrane segment at V129–M152 threads the bilayer. The Mitochondrial matrix segment spans residues E153–N155. Residues R156 to E183 form a helical membrane-spanning segment. At A184–D190 the chain is on the mitochondrial intermembrane side. Residues G191–L223 form a helical membrane-spanning segment. At K224–H232 the chain is on the mitochondrial matrix side. The helical transmembrane segment at F233–I256 threads the bilayer. At Y257–S261 the chain is on the mitochondrial intermembrane side.

The protein belongs to the cytochrome c oxidase subunit 3 family. Component of the cytochrome c oxidase (complex IV, CIV), a multisubunit enzyme composed of 14 subunits. The complex is composed of a catalytic core of 3 subunits MT-CO1, MT-CO2 and MT-CO3, encoded in the mitochondrial DNA, and 11 supernumerary subunits COX4I, COX5A, COX5B, COX6A, COX6B, COX6C, COX7A, COX7B, COX7C, COX8 and NDUFA4, which are encoded in the nuclear genome. The complex exists as a monomer or a dimer and forms supercomplexes (SCs) in the inner mitochondrial membrane with NADH-ubiquinone oxidoreductase (complex I, CI) and ubiquinol-cytochrome c oxidoreductase (cytochrome b-c1 complex, complex III, CIII), resulting in different assemblies (supercomplex SCI(1)III(2)IV(1) and megacomplex MCI(2)III(2)IV(2)).

The protein resides in the mitochondrion inner membrane. The enzyme catalyses 4 Fe(II)-[cytochrome c] + O2 + 8 H(+)(in) = 4 Fe(III)-[cytochrome c] + 2 H2O + 4 H(+)(out). Functionally, component of the cytochrome c oxidase, the last enzyme in the mitochondrial electron transport chain which drives oxidative phosphorylation. The respiratory chain contains 3 multisubunit complexes succinate dehydrogenase (complex II, CII), ubiquinol-cytochrome c oxidoreductase (cytochrome b-c1 complex, complex III, CIII) and cytochrome c oxidase (complex IV, CIV), that cooperate to transfer electrons derived from NADH and succinate to molecular oxygen, creating an electrochemical gradient over the inner membrane that drives transmembrane transport and the ATP synthase. Cytochrome c oxidase is the component of the respiratory chain that catalyzes the reduction of oxygen to water. Electrons originating from reduced cytochrome c in the intermembrane space (IMS) are transferred via the dinuclear copper A center (CU(A)) of subunit 2 and heme A of subunit 1 to the active site in subunit 1, a binuclear center (BNC) formed by heme A3 and copper B (CU(B)). The BNC reduces molecular oxygen to 2 water molecules using 4 electrons from cytochrome c in the IMS and 4 protons from the mitochondrial matrix. The polypeptide is Cytochrome c oxidase subunit 3 (MT-CO3) (Hippopotamus amphibius (Hippopotamus)).